The chain runs to 429 residues: Xaa-Pro dipeptidase (429 aa).

Residues aspartate 241, aspartate 252, histidine 334, glutamate 372, and glutamate 411 each contribute to the Mn(2+) site.

This sequence belongs to the peptidase M24B family. Bacterial-type prolidase subfamily. The cofactor is Mn(2+).

It catalyses the reaction Xaa-L-Pro dipeptide + H2O = an L-alpha-amino acid + L-proline. Its function is as follows. Splits dipeptides with a prolyl residue in the C-terminal position. This Marinobacter nauticus (strain ATCC 700491 / DSM 11845 / VT8) (Marinobacter aquaeolei) protein is Xaa-Pro dipeptidase.